A 1680-amino-acid chain; its full sequence is MFAVQGNQKFPKGLTKDNIQSLYQQWQVMRNQGATEENNPEFAQISSILRMVQRAHYARMQQMRNQSSEFPDAENTNLRKQQDTLPTTGFNNLPEGKAGMQTLPGRPASNGPTPPNPGNGNVGLNNPSYMNSQASPNIMNAPLQRDTSVPPAPSMVHPHTNTNANSNNLKVYANQLSQQNTSNPTYHNAYDMASMMKNGSRMNNSFPPTTPYPPANDTTVNSSLPHSFASPSSTFEQPHTVQSRAPSVDTTSSSHSFSARNIPANVSMQQQMGRRGSIPVNPSTFSASSPPSGSMLASPYNGYQNDAASFAHSKLPSSANPNTPFNSTATVDVGAAGSHFPYPQPSNLDAINAKTYFQSSSNSPAPYVYRNNLPPSATSFQPSSSRSPSVDPNTVKSAQHIPRMSPSPSASALKTQSHVPSAKVPPTSKLNHAQLAMLKSQIVAYNCLNSPNGQVPPAVQQAIFGRVYGASNEVSPSMPFQQNVPQMSSVKKDTPTRDANMRTSKAPYIQNIPNQFQRRAYSATIPVKNESLAKPSVSPMPLQQSTGKTEVAKRAQFPTNVNYSSCVDPRTYVKTPIPFSKFSSSENLSLIPSLLPPSISWDDVFLSSEIAIACSIANRIDFLEKENRPKSVNKKILQQDKSKSMIELRCLRLLEKQRSLRETINSVIPHSDSLAAGNLRLMFRNVKRQTMQEANLVLALAEKQKTEHAMRQKEKLLTHLRSIMLHRKSIVTKVDKQNKAKTQRCKDIINFHAHLEKEEKKRIERSARQRLQALRADDEAAYLQLLDKAKDTRITHLLKQTDQYLENLTRAVRIQQSNIHSGNTSGKGSNSAELEAPISEEDKNLDYFKVAHRIHEEVEQPKIFVGGTLKDYQLKGLEWMLSLYNNNLNGILADEMGLGKTIQTIAFITYLIEKKNQQGPFLIIVPLSTLTNWIMEFEKWAPSVKKIAYKGPPQLRKTLQSQIRSSNFNVLLTTFEYIIKDRPLLSRIKWVHMIIDEGHRIKNTQSKLTSTLSTYYHSQYRLILTGTPLQNNLPELWALLNFVLPKIFNSIKSFDEWFNTPFANTGGQDKIGLNEEEALLIIKRLHKVLRPFLFRRLKKDVEKELPDKVEKVIKCPLSGLQLKLYQQMKKHGMLFVDGEKGKTGIKGLQNTVMQLKKICNHPFIFEDVERAIDPSGTNVDLLWRAAGKFELLDRILPKLFLTGHKTLMFFQMTQIMTIMEDYLRSKNWKYLRLDGSTKSDDRCSLLAQFNDPKSDVYIFMLSTRAGGLGLNLQTADTVIIFDTDWNPHQDLQAQDRAHRIGQTKEVRILRLITEKSIEENILSRAQYKLDLDGKVIQAGKFDNKSTPEEREAFLRSLLEHDGDDDHDLTYGELQDDELNELISRTDEELVLFKKLDKERAATDIYGKGKPLERLLTVNELPDFYKVEVDSFAVQSSSELEDQYLERKRRRRNSISYTELTLDELNTVDDPSSTLMPRKRGRPRKKTNSGSSLSTPLSQESSLARSGRKNTPSYKQKALRRYCMEIFERLYNLQSEDGRFVNGLFLYPPNRKLYPDYYIIIKRPIALGKIKRNIKNDRYGDVGELIADFMLMFNNAYTYNEEHSIVYEDAKLMEKTLKEVIEDLEKNNSLHAYEEEALNEEQASLVFLENSEAELPLDSGIVSAEDDKVITYEDSSSSYSE.

Disordered stretches follow at residues 61–135 (QQMR…SQAS), 203–258 (NNSF…HSFS), 274–300 (RRGS…ASPY), and 367–427 (YVYR…VPPT). Positions 62–91 (QMRNQSSEFPDAENTNLRKQQDTLPTTGFN) are enriched in polar residues. 2 stretches are compositionally biased toward low complexity: residues 118 to 127 (GNGNVGLNNP) and 222 to 233 (SSLPHSFASPSS). The segment covering 234–245 (TFEQPHTVQSRA) has biased composition (polar residues). Low complexity-rich tracts occupy residues 247-258 (SVDTTSSSHSFS), 282-299 (PSTF…LASP), and 374-392 (PPSA…SVDP). Residues 406–419 (PSPSASALKTQSHV) show a composition bias toward polar residues. In terms of domain architecture, QLQ spans 429-465 (KLNHAQLAMLKSQIVAYNCLNSPNGQVPPAVQQAIFG). Residues 477–489 (SMPFQQNVPQMSS) show a composition bias toward polar residues. Residues 477–499 (SMPFQQNVPQMSSVKKDTPTRDA) form a disordered region. Over residues 490–499 (VKKDTPTRDA) the composition is skewed to basic and acidic residues. The HSA domain occupies 704 to 776 (QKTEHAMRQK…ARQRLQALRA (73 aa)). Polar residues predominate over residues 817–832 (SNIHSGNTSGKGSNSA). The interval 817-836 (SNIHSGNTSGKGSNSAELEA) is disordered. Residues 881–1046 (LSLYNNNLNG…WALLNFVLPK (166 aa)) form the Helicase ATP-binding domain. Residue 894–901 (DEMGLGKT) participates in ATP binding. A DEGH box motif is present at residues 996 to 999 (DEGH). In terms of domain architecture, Helicase C-terminal spans 1191-1354 (LLDRILPKLF…STPEEREAFL (164 aa)). The tract at residues 1466–1511 (TVDDPSSTLMPRKRGRPRKKTNSGSSLSTPLSQESSLARSGRKNTP) is disordered. Over residues 1476-1486 (PRKRGRPRKKT) the composition is skewed to basic residues. The segment covering 1488–1502 (SGSSLSTPLSQESSL) has biased composition (low complexity). The region spanning 1513-1623 (YKQKALRRYC…KTLKEVIEDL (111 aa)) is the Bromo domain.

The protein belongs to the SNF2/RAD54 helicase family. In terms of assembly, component of the SWI/SNF global transcription activator complex composed of at least arp9, arp42, snf5, snf22, snf30, sbf59, sol1, ssr1, ssr2, ssr3, ssr4 and tfg3.

Its subcellular location is the nucleus. Helicase. Component of the SWI/SNF complex, an ATP-dependent chromatin remodeling complex, required for the positive and negative regulation of gene expression of a large number of genes. It changes chromatin structure by altering DNA-histone contacts within a nucleosome, leading eventually to a change in nucleosome position, thus facilitating or repressing binding of gene-specific transcription factors. This is SWI/SNF chromatin-remodeling complex subunit snf22 (snf22) from Schizosaccharomyces pombe (strain 972 / ATCC 24843) (Fission yeast).